A 230-amino-acid polypeptide reads, in one-letter code: Intracellular hyphae protein 1 (230 aa).

An N-terminal signal peptide occupies residues 1–18 (MQTSFVALLAVAASLASA). Positions 20 to 102 (PHGGNSYEAS…KNNTLPVPTC (83 aa)) are disordered. 10 consecutive repeat copies span residues 30 to 33 (LPEP), 36 to 39 (LPEP), 42 to 45 (LPEP), 46 to 49 (VEGP), 50 to 53 (YKPK), 57 to 60 (LPEP), 65 to 68 (YKPK), 76 to 79 (VEGP), 80 to 83 (YKPK), and 84 to 87 (LPEP). A 5 X 4 AA repeats of L-P-E-P region spans residues 30 to 87 (LPEPTNLPEPTKLPEPVEGPYKPKPPILPEPIKDNYKPKTPILPEHVEGPYKPKLPEP). The interval 46–87 (VEGPYKPKPPILPEPIKDNYKPKTPILPEHVEGPYKPKLPEP) is 2 X 4 AA repeats of V-E-G-P. Positions 50–83 (YKPKPPILPEPIKDNYKPKTPILPEHVEGPYKPK) are 3 X 4 AA repeats of Y-K-P-K. The segment covering 74–84 (EHVEGPYKPKL) has biased composition (basic and acidic residues). Asn94 carries N-linked (GlcNAc...) asparagine glycosylation. Positions 108–152 (KTHKVKSGESLTTIAEKYDTGICNIAKLNNLADPNFVDLNQDLQI) constitute a LysM 1 domain. Residue Asn161 is glycosylated (N-linked (GlcNAc...) asparagine). Residues 183–227 (DIYSVVSGDTLTSIAQALQITLQSLKDANPGVVPEHLNVGQKLNV) enclose the LysM 2 domain.

In terms of assembly, forms a multimeric structure. In terms of processing, N-glycosylated and may be O-glycosylated. Expressed in penetration hyphae, infection vesicles and primary hyphae (intracellular hyphae).

The protein resides in the secreted. It localises to the cell wall. Functionally, may have roles in host-pathogen interaction, including establishment and maintenance of biotrophy, prevention of host recognition of the fungus and a barrier to host defense molecules. This is Intracellular hyphae protein 1 (CIH1) from Colletotrichum lindemuthianum (Bean anthracnose fungus).